A 184-amino-acid chain; its full sequence is Ribulose bisphosphate carboxylase small subunit, chloroplastic 2 (184 aa).

Residues 1–59 (MASSMMSNAATAVAVAATSGGAQANMVAPFNGLKSIASFPVTRKSNDITSIASNGGRVQ) constitute a chloroplast transit peptide.

The protein belongs to the RuBisCO small chain family. Heterohexadecamer of 8 large and 8 small subunits.

The protein resides in the plastid. Its subcellular location is the chloroplast. In terms of biological role, ruBisCO catalyzes two reactions: the carboxylation of D-ribulose 1,5-bisphosphate, the primary event in carbon dioxide fixation, as well as the oxidative fragmentation of the pentose substrate. Both reactions occur simultaneously and in competition at the same active site. Although the small subunit is not catalytic it is essential for maximal activity. The sequence is that of Ribulose bisphosphate carboxylase small subunit, chloroplastic 2 from Amaranthus hypochondriacus (Prince-of-Wales feather).